The sequence spans 721 residues: Fatty acid oxidation complex subunit alpha (721 aa).

The enoyl-CoA hydratase/isomerase stretch occupies residues 1-190 (MIYEGKAITV…KVGAVDAVVA (190 aa)). Position 297 (Asp297) interacts with substrate. The segment at 312 to 721 (KDVKQAAVLG…SFFGQASSEE (410 aa)) is 3-hydroxyacyl-CoA dehydrogenase. NAD(+) is bound by residues Met325, Asp344, 401–403 (VVE), Lys408, and Ser430. His451 acts as the For 3-hydroxyacyl-CoA dehydrogenase activity in catalysis. Asn454 is an NAD(+) binding site. Residues Asn501 and Tyr660 each coordinate substrate.

The protein in the N-terminal section; belongs to the enoyl-CoA hydratase/isomerase family. This sequence in the C-terminal section; belongs to the 3-hydroxyacyl-CoA dehydrogenase family. In terms of assembly, heterotetramer of two alpha chains (FadB) and two beta chains (FadA).

The enzyme catalyses a (3S)-3-hydroxyacyl-CoA + NAD(+) = a 3-oxoacyl-CoA + NADH + H(+). The catalysed reaction is a (3S)-3-hydroxyacyl-CoA = a (2E)-enoyl-CoA + H2O. It carries out the reaction a 4-saturated-(3S)-3-hydroxyacyl-CoA = a (3E)-enoyl-CoA + H2O. It catalyses the reaction (3S)-3-hydroxybutanoyl-CoA = (3R)-3-hydroxybutanoyl-CoA. The enzyme catalyses a (3Z)-enoyl-CoA = a 4-saturated (2E)-enoyl-CoA. The catalysed reaction is a (3E)-enoyl-CoA = a 4-saturated (2E)-enoyl-CoA. It participates in lipid metabolism; fatty acid beta-oxidation. In terms of biological role, involved in the aerobic and anaerobic degradation of long-chain fatty acids via beta-oxidation cycle. Catalyzes the formation of 3-oxoacyl-CoA from enoyl-CoA via L-3-hydroxyacyl-CoA. It can also use D-3-hydroxyacyl-CoA and cis-3-enoyl-CoA as substrate. This chain is Fatty acid oxidation complex subunit alpha, found in Pseudomonas savastanoi pv. phaseolicola (strain 1448A / Race 6) (Pseudomonas syringae pv. phaseolicola (strain 1448A / Race 6)).